Reading from the N-terminus, the 162-residue chain is Ribosomal RNA large subunit methyltransferase H (162 aa).

Residues Leu-78, Gly-109, and 128 to 133 (LSALTL) contribute to the S-adenosyl-L-methionine site.

Belongs to the RNA methyltransferase RlmH family. Homodimer.

The protein localises to the cytoplasm. It catalyses the reaction pseudouridine(1915) in 23S rRNA + S-adenosyl-L-methionine = N(3)-methylpseudouridine(1915) in 23S rRNA + S-adenosyl-L-homocysteine + H(+). In terms of biological role, specifically methylates the pseudouridine at position 1915 (m3Psi1915) in 23S rRNA. This Psychrobacter cryohalolentis (strain ATCC BAA-1226 / DSM 17306 / VKM B-2378 / K5) protein is Ribosomal RNA large subunit methyltransferase H.